Consider the following 94-residue polypeptide: Small ribosomal subunit protein uS19 (94 aa).

The protein belongs to the universal ribosomal protein uS19 family.

Its function is as follows. Protein S19 forms a complex with S13 that binds strongly to the 16S ribosomal RNA. The sequence is that of Small ribosomal subunit protein uS19 from Finegoldia magna (strain ATCC 29328 / DSM 20472 / WAL 2508) (Peptostreptococcus magnus).